The chain runs to 87 residues: Kappa-5-bungarotoxin (87 aa).

The N-terminal stretch at 1–21 (MKTLLLTLVVVTIVCLDLGYT) is a signal peptide. Cystine bridges form between Cys24–Cys42, Cys35–Cys63, Cys48–Cys52, Cys67–Cys79, and Cys80–Cys85.

It belongs to the three-finger toxin family. Long-chain subfamily. Kappa-neurotoxin sub-subfamily. As to quaternary structure, homo- and heterodimer; non-covalently linked. As to expression, expressed by the venom gland.

It is found in the secreted. Functionally, postsynaptic neurotoxin that binds and inhibits neuronal nicotinic acetylcholine receptors (nAChR) with high affinity (IC(50)&lt;100 nM). Is a selective, and slowly reversible antagonist of alpha-3/CHRNA3-containing and some alpha-4/CHRNA4-containing AChRs. This is Kappa-5-bungarotoxin from Bungarus multicinctus (Many-banded krait).